Here is a 129-residue protein sequence, read N- to C-terminus: L5 homolog (129 aa).

A helical; Signal-anchor for type III membrane protein transmembrane segment spans residues Tyr27–Lys47. Cys76 and Cys106 form a disulfide bridge.

Belongs to the chordopoxvirinae L5 family. Part of a stable entry-fusion complex (EFC) which is at least composed of proteins A16, A21, A28, G3, G9, H2, J5, and L5. Formation of the viral membrane is necessary for the assembly of the complex. Interacts with G3. Post-translationally, most cysteines are linked by disulfide bonds. They are created by the viral disulfide bond formation pathway, a poxvirus-specific redox pathway that operates on the cytoplasmic side of the MV membranes.

The protein resides in the virion membrane. In terms of biological role, envelope protein part of the entry-fusion complex responsible for the virus membrane fusion with host cell membrane during virus entry. Also plays a role in cell-cell fusion (syncytium formation). The sequence is that of L5 homolog from Fowlpox virus (strain NVSL) (FPV).